Here is a 206-residue protein sequence, read N- to C-terminus: LexA repressor (206 aa).

A DNA-binding region (H-T-H motif) is located at residues Arg-28–Lys-48. Catalysis depends on for autocatalytic cleavage activity residues Ser-122 and Lys-160.

The protein belongs to the peptidase S24 family. In terms of assembly, homodimer.

It catalyses the reaction Hydrolysis of Ala-|-Gly bond in repressor LexA.. Represses a number of genes involved in the response to DNA damage (SOS response), including recA and lexA. In the presence of single-stranded DNA, RecA interacts with LexA causing an autocatalytic cleavage which disrupts the DNA-binding part of LexA, leading to derepression of the SOS regulon and eventually DNA repair. The protein is LexA repressor of Tolumonas auensis (strain DSM 9187 / NBRC 110442 / TA 4).